The primary structure comprises 608 residues: FAD-binding monooxygenase ktnD (608 aa).

An N-linked (GlcNAc...) asparagine glycan is attached at Asn-4. Residues Ala-17–His-37 form a helical membrane-spanning segment. Residues Thr-56–Asn-59, Asp-68–Val-69, and Tyr-74 each bind FAD. An NADP(+)-binding site is contributed by Ala-66 to Asp-68. An N-linked (GlcNAc...) asparagine glycan is attached at Asn-114. NADP(+) contacts are provided by residues Asn-201–Gln-207 and Arg-224–Ser-225. Residue Asn-325 is glycosylated (N-linked (GlcNAc...) asparagine). Residues Ala-535–Trp-555 form a helical membrane-spanning segment.

The protein belongs to the FAD-binding monooxygenase family. It depends on FAD as a cofactor.

It localises to the membrane. In terms of biological role, non-reducing polyketide synthase; part of the gene cluster that mediates the biosynthesis of the bicoumarin kotanin. The non-reducing polyketide synthase ktnS first catalyzes the formation of the pentaketidic 4,7-dihydroxy-5-methylcoumarin from acetyl coenzyme A and 4 malonyl coenzyme A molecules. Further O-methylation by ktnB leads to the formation of 7-demethylsiderin. Then, an oxidative phenol coupling catalyzed by the cytochrome P450 monooxygenase ktnC forms the 8,8'-dimer P-orlandin via dimerization the monomeric precursor, 7-demethylsiderin. P-orlandin is subsequently O-methylated in a stepwise fashion to demethylkotanin and kotanin. The function of ktnD within the pathway has not been determined yet. The protein is FAD-binding monooxygenase ktnD of Aspergillus niger (strain ATCC MYA-4892 / CBS 513.88 / FGSC A1513).